A 278-amino-acid chain; its full sequence is Cytidine kinase (278 aa).

Threonine 203–glycine 208 serves as a coordination point for ATP. Catalysis depends on aspartate 237, which acts as the Proton acceptor.

Belongs to the carbohydrate kinase PfkB family. The cofactor is Mg(2+).

It catalyses the reaction cytidine + ATP = CMP + ADP + H(+). In terms of biological role, involved in nucleoside degradation. Phosphorylates cytidine to CMP. Can also act on deoxycytidine and uridine, but is most active with cytidine. ATP is the most preferred phosphate donor, but it can also use GTP, CTP or UTP. This chain is Cytidine kinase, found in Thermococcus kodakarensis (strain ATCC BAA-918 / JCM 12380 / KOD1) (Pyrococcus kodakaraensis (strain KOD1)).